Here is a 473-residue protein sequence, read N- to C-terminus: Glutamate--tRNA ligase (473 aa).

The 'HIGH' region motif lies at 11-21 (PSPTGFLHIGG). The short motif at 240-244 (KLSKR) is the 'KMSKS' region element. Lysine 243 contacts ATP.

Belongs to the class-I aminoacyl-tRNA synthetase family. Glutamate--tRNA ligase type 1 subfamily. In terms of assembly, monomer.

The protein localises to the cytoplasm. It carries out the reaction tRNA(Glu) + L-glutamate + ATP = L-glutamyl-tRNA(Glu) + AMP + diphosphate. Its function is as follows. Catalyzes the attachment of glutamate to tRNA(Glu) in a two-step reaction: glutamate is first activated by ATP to form Glu-AMP and then transferred to the acceptor end of tRNA(Glu). This chain is Glutamate--tRNA ligase, found in Rhodopseudomonas palustris (strain BisB5).